A 425-amino-acid chain; its full sequence is Lipoyl synthase, mitochondrial (425 aa).

Residues 1–33 constitute a mitochondrion transit peptide; sequence MAASSTRLRCLYASSSTWKTSPSQSLISLSRRY. A disordered region spans residues 17 to 55; that stretch reads TWKTSPSQSLISLSRRYATTSSAPPTPSDESSSTLPKRR. Residues 33–51 are compositionally biased toward polar residues; sequence YATTSSAPPTPSDESSSTL. Residues Cys-142, Cys-147, Cys-153, Cys-173, Cys-177, Cys-180, and Ser-388 each coordinate [4Fe-4S] cluster. Residues 156 to 377 enclose the Radical SAM core domain; that stretch reads GSDKSAATAT…RQRALEMGFL (222 aa).

It belongs to the radical SAM superfamily. Lipoyl synthase family. Requires [4Fe-4S] cluster as cofactor.

Its subcellular location is the mitochondrion. It carries out the reaction [[Fe-S] cluster scaffold protein carrying a second [4Fe-4S](2+) cluster] + N(6)-octanoyl-L-lysyl-[protein] + 2 oxidized [2Fe-2S]-[ferredoxin] + 2 S-adenosyl-L-methionine + 4 H(+) = [[Fe-S] cluster scaffold protein] + N(6)-[(R)-dihydrolipoyl]-L-lysyl-[protein] + 4 Fe(3+) + 2 hydrogen sulfide + 2 5'-deoxyadenosine + 2 L-methionine + 2 reduced [2Fe-2S]-[ferredoxin]. The protein operates within protein modification; protein lipoylation via endogenous pathway; protein N(6)-(lipoyl)lysine from octanoyl-[acyl-carrier-protein]: step 2/2. Catalyzes the radical-mediated insertion of two sulfur atoms into the C-6 and C-8 positions of the octanoyl moiety bound to the lipoyl domains of lipoate-dependent enzymes, thereby converting the octanoylated domains into lipoylated derivatives. The sequence is that of Lipoyl synthase, mitochondrial from Talaromyces marneffei (strain ATCC 18224 / CBS 334.59 / QM 7333) (Penicillium marneffei).